We begin with the raw amino-acid sequence, 344 residues long: S-adenosylmethionine:tRNA ribosyltransferase-isomerase (344 aa).

The protein belongs to the QueA family. As to quaternary structure, monomer.

Its subcellular location is the cytoplasm. The enzyme catalyses 7-aminomethyl-7-carbaguanosine(34) in tRNA + S-adenosyl-L-methionine = epoxyqueuosine(34) in tRNA + adenine + L-methionine + 2 H(+). It functions in the pathway tRNA modification; tRNA-queuosine biosynthesis. Functionally, transfers and isomerizes the ribose moiety from AdoMet to the 7-aminomethyl group of 7-deazaguanine (preQ1-tRNA) to give epoxyqueuosine (oQ-tRNA). This Levilactobacillus brevis (strain ATCC 367 / BCRC 12310 / CIP 105137 / JCM 1170 / LMG 11437 / NCIMB 947 / NCTC 947) (Lactobacillus brevis) protein is S-adenosylmethionine:tRNA ribosyltransferase-isomerase.